The following is a 230-amino-acid chain: Orotidine 5'-phosphate decarboxylase (230 aa).

Residues Asp-11, Lys-34, 61-70 (DLKLHDIPNT), Thr-117, Arg-179, Gln-188, Gly-208, and Arg-209 contribute to the substrate site. The active-site Proton donor is Lys-63.

It belongs to the OMP decarboxylase family. Type 1 subfamily. Homodimer.

The enzyme catalyses orotidine 5'-phosphate + H(+) = UMP + CO2. Its pathway is pyrimidine metabolism; UMP biosynthesis via de novo pathway; UMP from orotate: step 2/2. Functionally, catalyzes the decarboxylation of orotidine 5'-monophosphate (OMP) to uridine 5'-monophosphate (UMP). The chain is Orotidine 5'-phosphate decarboxylase from Streptococcus equi subsp. zooepidemicus (strain H70).